Reading from the N-terminus, the 321-residue chain is CPX chromosomal region candidate gene 1 protein homolog (321 aa).

A disordered region spans residues 1–83; it reads MSSPTKEGSD…TEIQKDQREE (83 aa). Polar residues-rich tracts occupy residues 21–32 and 44–60; these read NEPSNDCTTDIE and VETN…TSQE.

This is CPX chromosomal region candidate gene 1 protein homolog (CPXCR1) from Macaca fascicularis (Crab-eating macaque).